The following is a 474-amino-acid chain: Nuclear hormone receptor family member nhr-91 (474 aa).

The disordered stretch occupies residues 50-69 (SMTPSFSQTESPNSETDDST). The segment covering 51–69 (MTPSFSQTESPNSETDDST) has biased composition (polar residues). Positions 97–172 (SKLCSVCGDK…KGMLTEAVRE (76 aa)) form a DNA-binding region, nuclear receptor. 2 NR C4-type zinc fingers span residues 100–120 (CSVC…CEGC) and 136–155 (CSQD…CQSC). One can recognise an NR LBD domain in the interval 215-474 (SGKKLIKELV…KNPRRLVFDE (260 aa)).

It belongs to the nuclear hormone receptor family.

It is found in the nucleus. Orphan nuclear receptor. The protein is Nuclear hormone receptor family member nhr-91 (nhr-91) of Caenorhabditis elegans.